A 454-amino-acid chain; its full sequence is UPF0210 protein EUBELI_01067 (454 aa).

This sequence belongs to the UPF0210 family. As to quaternary structure, homodimer.

This chain is UPF0210 protein EUBELI_01067, found in Lachnospira eligens (strain ATCC 27750 / DSM 3376 / VPI C15-48 / C15-B4) (Eubacterium eligens).